We begin with the raw amino-acid sequence, 219 residues long: C-8 sterol isomerase erg2 (219 aa).

Residues 1–21 (MKLTKFLTVFIPFIAGLIYYI) traverse the membrane as a helical segment.

The protein belongs to the ERG2 family.

It localises to the endoplasmic reticulum membrane. The enzyme catalyses fecosterol = episterol. It participates in steroid metabolism; ergosterol biosynthesis. Functionally, C-8 sterol isomerase; part of the third module of ergosterol biosynthesis pathway that includes by the late steps of the pathway. Erg2 catalyzes the reaction which results in unsaturation at C-7 in the B ring of sterols and thus converts fecosterol to episterol. The third module or late pathway involves the ergosterol synthesis itself through consecutive reactions that mainly occur in the endoplasmic reticulum (ER) membrane. Firstly, the squalene synthase erg9 catalyzes the condensation of 2 farnesyl pyrophosphate moieties to form squalene, which is the precursor of all steroids. Secondly, squalene is converted into lanosterol by the consecutive action of the squalene epoxidase erg1 and the lanosterol synthase erg7. The lanosterol 14-alpha-demethylase erg11/cyp1 catalyzes C14-demethylation of lanosterol to produce 4,4'-dimethyl cholesta-8,14,24-triene-3-beta-ol. In the next steps, a complex process involving various demethylation, reduction and desaturation reactions catalyzed by the C-14 reductase erg24 and the C-4 demethylation complex erg25-erg26-erg27 leads to the production of zymosterol. Erg28 likely functions in the C-4 demethylation complex reaction by tethering erg26 and Erg27 to the endoplasmic reticulum or to facilitate interaction between these proteins. Then, the sterol 24-C-methyltransferase erg6 catalyzes the methyl transfer from S-adenosyl-methionine to the C-24 of zymosterol to form fecosterol. The C-8 sterol isomerase erg2 catalyzes the reaction which results in unsaturation at C-7 in the B ring of sterols and thus converts fecosterol to episterol. The sterol-C5-desaturases erg31 and erg32 then catalyze the introduction of a C-5 double bond in the B ring to produce 5-dehydroepisterol. The C-22 sterol desaturase erg5 further converts 5-dehydroepisterol into ergosta-5,7,22,24(28)-tetraen-3beta-ol by forming the C-22(23) double bond in the sterol side chain. Finally, ergosta-5,7,22,24(28)-tetraen-3beta-ol is substrate of the C-24(28) sterol reductase erg4 to produce ergosterol. In the genus Schizosaccharomyces, a second route exists between lanosterol and fecosterol, via the methylation of lanosterol to eburicol by erg6, followed by C14-demethylation by erg11/cyp1 and C4-demethylation by the demethylation complex erg25-erg26-erg27. The polypeptide is C-8 sterol isomerase erg2 (Schizosaccharomyces pombe (strain 972 / ATCC 24843) (Fission yeast)).